The sequence spans 807 residues: Mechanosensitive cation channel TMEM63A (807 aa).

At 1–51 (MMDSPFLELWQSKAVSIREQLGLGDRPNDSYCYNSAKNSTVLQGVTFGGIP) the chain is on the extracellular side. N38 carries N-linked (GlcNAc...) asparagine glycosylation. Residues 52 to 74 (TVLLIDVSCFLFLILVFSIIRRR) form a helical membrane-spanning segment. Topologically, residues 75–134 (FWDYGRIALVSEADSESRFQRLSSTSSSGQQDFENELGCCPWLTAIFRLHDDQILEWCGE) are cytoplasmic. A helical transmembrane segment spans residues 135–167 (DAIHYLSFQRHIIFLLVVVSFLSLCVILPVNLS). At 168–191 (GDLLDKDPYSFGRTTIANLQTDND) the chain is on the extracellular side. Residues 192–217 (LLWLHTIFAVIYLFLTVGFMRHHTQS) traverse the membrane as a helical segment. Residues 218 to 416 (IKYKEENLVR…CWKNLSIQGL (199 aa)) lie on the Cytoplasmic side of the membrane. The interval 219–414 (KYKEENLVRR…DICWKNLSIQ (196 aa)) is intracellular linker IL2; confers mechanosensitivity. The chain crosses the membrane as a helical span at residues 417–444 (RWWLQWLGINFTLFLGLFFLTTPSIILS). Residues 445 to 462 (TMDKFNVTKPIHALNNPI) lie on the Extracellular side of the membrane. N-linked (GlcNAc...) asparagine glycosylation occurs at N450. Residues 463–490 (ISQFFPTLLLWSFSALLPSIVYYSTLLE) form a helical membrane-spanning segment. Residues 491 to 495 (SHWTK) lie on the Cytoplasmic side of the membrane. A helical membrane pass occupies residues 496 to 532 (SGENQIMMTKVYIFLIFMVLILPSLGLTSLDFFFRWL). Residues 533 to 554 (FDKTSSEASIRLECVFLPDQGA) lie on the Extracellular side of the membrane. A helical membrane pass occupies residues 555–586 (FFVNYVIASAFIGNGMELLRLPGLILYTFRMI). The gating helix stretch occupies residues 555-586 (FFVNYVIASAFIGNGMELLRLPGLILYTFRMI). Residues 587 to 606 (MAKTAADRRNVKQNQAFQYE) lie on the Cytoplasmic side of the membrane. A helical transmembrane segment spans residues 607-624 (FGAMYAWMLCVFTVIVAY). Residues 625 to 628 (SITC) are Extracellular-facing. A helical membrane pass occupies residues 629 to 651 (PIIAPFGLIYILLKHMVDRHNLY). Residues 652–661 (FVYLPAKLEK) are Cytoplasmic-facing. The helical transmembrane segment at 662–689 (GIHFAAVNQALAAPILCLFWLYFFSFLR) threads the bilayer. Over 690-694 (LGMKA) the chain is Extracellular. The helical transmembrane segment at 695–709 (PATLFTFLVLLLTIL) threads the bilayer. Residues 710–807 (VCLAHTCFGC…GSVAAAPQEA (98 aa)) lie on the Cytoplasmic side of the membrane. Residue S739 is modified to Phosphoserine.

It belongs to the CSC1 (TC 1.A.17) family. Monomer. Post-translationally, N-Glycosylated.

The protein resides in the lysosome membrane. The protein localises to the early endosome membrane. Its subcellular location is the cell membrane. The catalysed reaction is Ca(2+)(in) = Ca(2+)(out). Functionally, mechanosensitive cation channel with low conductance and high activation threshold. In contrast to TMEM63B, does not show phospholipid scramblase activity. Acts as a regulator of lysosomal morphology by mediating lysosomal mechanosensitivity. Important for the baby's first breath and respiration throughout life. Upon lung inflation conducts cation currents in alveolar type 1 and 2 cells triggering lamellar body exocytosis and surfactant secretion into airspace. Also acts as an osmosensitive cation channel preferentially activated by hypotonic stress. The sequence is that of Mechanosensitive cation channel TMEM63A from Homo sapiens (Human).